Reading from the N-terminus, the 317-residue chain is tRNA N6-adenosine threonylcarbamoyltransferase (317 aa).

Residues histidine 110 and histidine 114 each coordinate Fe cation. Substrate is bound by residues 132–136 (VVSGG), aspartate 165, glycine 178, aspartate 182, and asparagine 271. Aspartate 300 lines the Fe cation pocket.

The protein belongs to the KAE1 / TsaD family. The cofactor is Fe(2+).

The protein resides in the cytoplasm. It catalyses the reaction L-threonylcarbamoyladenylate + adenosine(37) in tRNA = N(6)-L-threonylcarbamoyladenosine(37) in tRNA + AMP + H(+). Functionally, required for the formation of a threonylcarbamoyl group on adenosine at position 37 (t(6)A37) in tRNAs that read codons beginning with adenine. Is involved in the transfer of the threonylcarbamoyl moiety of threonylcarbamoyl-AMP (TC-AMP) to the N6 group of A37, together with TsaE and TsaB. TsaD likely plays a direct catalytic role in this reaction. The protein is tRNA N6-adenosine threonylcarbamoyltransferase of Mesoplasma florum (strain ATCC 33453 / NBRC 100688 / NCTC 11704 / L1) (Acholeplasma florum).